The chain runs to 762 residues: Endonuclease MutS2 (762 aa).

The disordered stretch occupies residues 1–22 (MSDAPKRSLNPTLMMNNNNTPP). The segment covering 9–20 (LNPTLMMNNNNT) has biased composition (low complexity). An ATP-binding site is contributed by 333–340 (GVNAGGKT). In terms of domain architecture, Smr spans 688-762 (LDLRGQRSEE…GGSGVKIVKL (75 aa)).

The protein belongs to the DNA mismatch repair MutS family. MutS2 subfamily. In terms of assembly, homodimer. Binds to stalled ribosomes, contacting rRNA.

With respect to regulation, ATPase activity is stimulated by DNA. Endonuclease that is involved in the suppression of homologous recombination and may thus have a key role in the control of bacterial genetic diversity. Also involved in repairing oxidative DNA damage. Has ATPase activity. Binds DNA. Its function is as follows. Endonuclease that is involved in the suppression of homologous recombination and thus may have a key role in the control of bacterial genetic diversity. Functionally, acts as a ribosome collision sensor, splitting the ribosome into its 2 subunits. Detects stalled/collided 70S ribosomes which it binds and splits by an ATP-hydrolysis driven conformational change. Acts upstream of the ribosome quality control system (RQC), a ribosome-associated complex that mediates the extraction of incompletely synthesized nascent chains from stalled ribosomes and their subsequent degradation. Probably generates substrates for RQC. This is Endonuclease MutS2 from Helicobacter pylori (strain ATCC 700392 / 26695) (Campylobacter pylori).